We begin with the raw amino-acid sequence, 224 residues long: Urease accessory protein UreG (224 aa).

Residues 1–20 show a composition bias toward basic residues; sequence MATHSHPHSHTVPARPRRVR. The interval 1–25 is disordered; that stretch reads MATHSHPHSHTVPARPRRVRKPGEP. 32–39 provides a ligand contact to GTP; that stretch reads GPVGSGKT.

The protein belongs to the SIMIBI class G3E GTPase family. UreG subfamily. As to quaternary structure, homodimer. UreD, UreF and UreG form a complex that acts as a GTP-hydrolysis-dependent molecular chaperone, activating the urease apoprotein by helping to assemble the nickel containing metallocenter of UreC. The UreE protein probably delivers the nickel.

Its subcellular location is the cytoplasm. Functionally, facilitates the functional incorporation of the urease nickel metallocenter. This process requires GTP hydrolysis, probably effectuated by UreG. This is Urease accessory protein UreG from Mycobacterium bovis (strain ATCC BAA-935 / AF2122/97).